A 97-amino-acid chain; its full sequence is Lipolysis-activating peptide 1-alpha chain (97 aa).

A signal peptide spans 1-21 (MNITLFCSVFILISLAGLSVS). The LCN-type CS-alpha/beta domain occupies 25 to 88 (PGNYPMSLYG…FWAAHKNHCK (64 aa)). Disulfide bonds link cysteine 39–cysteine 62, cysteine 48–cysteine 67, and cysteine 52–cysteine 69.

The protein belongs to the long (3 C-C) scorpion toxin superfamily. Monomer (edited version) and heterodimer (non-edited version) of this alpha chain and a beta chain (AC D9U2A2). In terms of tissue distribution, expressed by the venom gland.

The protein resides in the secreted. In terms of biological role, the heterodimer non-edited LVP1 induces lipolysis in rat adipocytes. Induction of lipolysis by LVP1 appears to be mediated through the beta-2 adrenergic receptor pathway (ADRB2). The edited BmKBTx-like, similar to beta-toxins, may modulate voltage-gated sodium channels (Nav) and may block voltage-gated potassium channels (Kv). In Lychas mucronatus (Chinese swimming scorpion), this protein is Lipolysis-activating peptide 1-alpha chain.